Here is a 235-residue protein sequence, read N- to C-terminus: Large ribosomal subunit protein uL1 (235 aa).

Belongs to the universal ribosomal protein uL1 family. As to quaternary structure, part of the 50S ribosomal subunit.

In terms of biological role, binds directly to 23S rRNA. The L1 stalk is quite mobile in the ribosome, and is involved in E site tRNA release. Protein L1 is also a translational repressor protein, it controls the translation of the L11 operon by binding to its mRNA. This chain is Large ribosomal subunit protein uL1, found in Mycobacteroides abscessus (strain ATCC 19977 / DSM 44196 / CCUG 20993 / CIP 104536 / JCM 13569 / NCTC 13031 / TMC 1543 / L948) (Mycobacterium abscessus).